We begin with the raw amino-acid sequence, 131 residues long: Small ribosomal subunit protein uS8 (131 aa).

The protein belongs to the universal ribosomal protein uS8 family. Part of the 30S ribosomal subunit. Contacts proteins S5 and S12.

In terms of biological role, one of the primary rRNA binding proteins, it binds directly to 16S rRNA central domain where it helps coordinate assembly of the platform of the 30S subunit. The sequence is that of Small ribosomal subunit protein uS8 from Nitrosospira multiformis (strain ATCC 25196 / NCIMB 11849 / C 71).